A 209-amino-acid chain; its full sequence is Large ribosomal subunit protein uL3 (209 aa).

Residues 127–164 are disordered; it reads NFSGGQRTHGQSDRLRAPGSVGGASDPSRTFKGTKMGG.

This sequence belongs to the universal ribosomal protein uL3 family. In terms of assembly, part of the 50S ribosomal subunit. Forms a cluster with proteins L14 and L19.

Functionally, one of the primary rRNA binding proteins, it binds directly near the 3'-end of the 23S rRNA, where it nucleates assembly of the 50S subunit. This Chlorobium phaeobacteroides (strain BS1) protein is Large ribosomal subunit protein uL3.